Reading from the N-terminus, the 598-residue chain is Elongation factor 4 (598 aa).

Positions 4 to 186 (DHIRNFSIIA…AIVKRVPPPK (183 aa)) constitute a tr-type G domain. Residues 16 to 21 (DHGKST) and 133 to 136 (NKID) contribute to the GTP site.

It belongs to the TRAFAC class translation factor GTPase superfamily. Classic translation factor GTPase family. LepA subfamily.

It is found in the cell inner membrane. It catalyses the reaction GTP + H2O = GDP + phosphate + H(+). Functionally, required for accurate and efficient protein synthesis under certain stress conditions. May act as a fidelity factor of the translation reaction, by catalyzing a one-codon backward translocation of tRNAs on improperly translocated ribosomes. Back-translocation proceeds from a post-translocation (POST) complex to a pre-translocation (PRE) complex, thus giving elongation factor G a second chance to translocate the tRNAs correctly. Binds to ribosomes in a GTP-dependent manner. In Magnetococcus marinus (strain ATCC BAA-1437 / JCM 17883 / MC-1), this protein is Elongation factor 4.